Here is a 158-residue protein sequence, read N- to C-terminus: Transcription elongation factor GreA (158 aa).

Residues 10–76 (TLEGKKKLEE…QIEKMIRNAE (67 aa)) adopt a coiled-coil conformation.

It belongs to the GreA/GreB family.

Its function is as follows. Necessary for efficient RNA polymerase transcription elongation past template-encoded arresting sites. The arresting sites in DNA have the property of trapping a certain fraction of elongating RNA polymerases that pass through, resulting in locked ternary complexes. Cleavage of the nascent transcript by cleavage factors such as GreA or GreB allows the resumption of elongation from the new 3'terminus. GreA releases sequences of 2 to 3 nucleotides. This chain is Transcription elongation factor GreA, found in Halalkalibacterium halodurans (strain ATCC BAA-125 / DSM 18197 / FERM 7344 / JCM 9153 / C-125) (Bacillus halodurans).